The sequence spans 1044 residues: Ras GTPase-activating protein 1 (1044 aa).

At Met-1 the chain carries N-acetylmethionine. Residues 1–160 (MMAAEAGGEE…DEGDSLDGPE (160 aa)) are hydrophobic. Positions 178 to 269 (WYHGKLDRTI…LKGEKLLYPV (92 aa)) constitute an SH2 1 domain. The SH3 domain maps to 276–338 (EDRRRVRAIL…VEDLVEEVGR (63 aa)). An SH2 2 domain is found at 348-438 (WFHGKISKQE…VEGYYLKEPV (91 aa)). The PH domain occupies 471 to 574 (NIVKKGYLLK…WMKGLQAFCN (104 aa)). Residues 574 to 687 (NLRKSSPGTS…QKGHATDEWF (114 aa)) enclose the C2 domain. Tyr-612 carries the phosphotyrosine modification. Repeats lie at residues 646–664 (PDIN…KSKD) and 665–683 (PDIL…GHAT). Residues 761–971 (KLESLLLCTL…HRMIMFLDEL (211 aa)) form the Ras-GAP domain. Residue Ser-828 is modified to Phosphoserine.

Interacts with SQSTM1. Interacts with SPSB1; the interaction does not promote degradation. Interacts with CAV2 (tyrosine phosphorylated form). Directly interacts with NCK1. Interacts with PDGFRB (tyrosine phosphorylated). Interacts (via SH2 domain) with the 'Tyr-9' phosphorylated form of PDPK1. Interacts with tyrosine-phosphorylated EPHB4. In terms of processing, phosphorylated by SRC and LCK. The phosphorylation SRC inhibits its ability to stimulate the Ras-GTPase activity, whereas phosphorylation by LCK does not display any effect on stimulation activity.

The protein resides in the cytoplasm. Inhibitory regulator of the Ras-cyclic AMP pathway. Stimulates the GTPase of normal but not oncogenic Ras p21. This is Ras GTPase-activating protein 1 (RASA1) from Bos taurus (Bovine).